A 244-amino-acid polypeptide reads, in one-letter code: 5-oxoprolinase subunit A (244 aa).

Belongs to the LamB/PxpA family. In terms of assembly, forms a complex composed of PxpA, PxpB and PxpC.

The catalysed reaction is 5-oxo-L-proline + ATP + 2 H2O = L-glutamate + ADP + phosphate + H(+). Catalyzes the cleavage of 5-oxoproline to form L-glutamate coupled to the hydrolysis of ATP to ADP and inorganic phosphate. The sequence is that of 5-oxoprolinase subunit A from Salmonella paratyphi A (strain ATCC 9150 / SARB42).